The following is a 306-amino-acid chain: Deoxyribokinase (306 aa).

Residues 10–12 (MVD), 38–42 (GKGAN), and Glu-139 contribute to the substrate site. ATP-binding positions include Asn-184 and 220–225 (TMGEKG). K(+)-binding residues include Asp-246 and Ser-248. ATP is bound at residue 251 to 252 (GD). A substrate-binding site is contributed by Asp-252. Asp-252 functions as the Proton acceptor in the catalytic mechanism. The K(+) site is built by Ser-282, Gly-285, Gly-287, and Ser-291.

The protein belongs to the carbohydrate kinase PfkB family. Deoxyribokinase subfamily. As to quaternary structure, homodimer. The cofactor is Mg(2+).

It is found in the cytoplasm. The enzyme catalyses 2-deoxy-D-ribose + ATP = 2-deoxy-D-ribose 5-phosphate + ADP + H(+). Its function is as follows. Catalyzes the ATP-dependent phosphorylation of 2-deoxy-D-ribose to 2-deoxy-D-ribose 5-phosphate (dRib-5P), allowing the use of deoxyribose as the sole carbon source. Can also use D-ribose, with much lower efficiency. The chain is Deoxyribokinase from Salmonella typhi.